Consider the following 231-residue polypeptide: Cytidylate kinase (231 aa).

Residue 12–20 participates in ATP binding; the sequence is GPSGAGKGT.

Belongs to the cytidylate kinase family. Type 1 subfamily.

Its subcellular location is the cytoplasm. It carries out the reaction CMP + ATP = CDP + ADP. It catalyses the reaction dCMP + ATP = dCDP + ADP. This chain is Cytidylate kinase, found in Shewanella amazonensis (strain ATCC BAA-1098 / SB2B).